Here is a 431-residue protein sequence, read N- to C-terminus: MGNNIKVTFNPDKIAAWWPAVGTYYTTTYPQNQSVFQPGIYQTTSLINPKNQQELDSVLINRYKQIDWNTWQGFPVDQKLPLVSRDPPLKPHINQSAQTFEIKPGPIIVPGIRDIPRGLVPPQTPTNRDQGRKPTPPTPPLRDTHPHLTMKNQTFRLQGFVDGLRDLTTTERYHNAYGDPFTTLSPVVPTVSTILSPPSTTGDPALSPEMSPSSLLGLLAGLQVVYFLWTKILTIAQNLDWWWTSLSFPGGIPECTGQNSQFQTCKHLPTSCPPTCNGFRWMYLRRFIIYLLVLLLCLIFLLVLLDWKGLIPVCPLQPTTETTVNCRQCTLSVQDTYTPPYCCCLKPTAGNCTCWPIPSSWALGNYLWEWALARFSWLNLLVPLLQWLGGISLIAWFLLIWMIWFWGPALLSILPPFIPIFVLFFLIWVYI.

Gly-2 carries N-myristoyl glycine; by host lipidation. The interval 2–148 (GNNIKVTFNP…PPLRDTHPHL (147 aa)) is pre-S1. Residues 2 to 207 (GNNIKVTFNP…PSTTGDPALS (206 aa)) form a pre-S region. The Virion surface; in external conformation segment spans residues 2 to 214 (GNNIKVTFNP…ALSPEMSPSS (213 aa)). Residues 2-286 (GNNIKVTFNP…NGFRWMYLRR (285 aa)) are Intravirion; in internal conformation-facing. The N-linked (GlcNAc...) asparagine glycan is linked to Asn-3. Residues 115-146 (IPRGLVPPQTPTNRDQGRKPTPPTPPLRDTHP) form a disordered region. The pre-S2 stretch occupies residues 149-207 (TMKNQTFRLQGFVDGLRDLTTTERYHNAYGDPFTTLSPVVPTVSTILSPPSTTGDPALS). A helical transmembrane segment spans residues 215–235 (LLGLLAGLQVVYFLWTKILTI). At 236 to 286 (AQNLDWWWTSLSFPGGIPECTGQNSQFQTCKHLPTSCPPTCNGFRWMYLRR) the chain is on the intravirion; in external conformation side. The chain crosses the membrane as a helical span at residues 287-307 (FIIYLLVLLLCLIFLLVLLDW). At 308–379 (KGLIPVCPLQ…WALARFSWLN (72 aa)) the chain is on the virion surface side. A glycan (N-linked (GlcNAc...) asparagine; by host) is linked at Asn-351. Residues 380–400 (LLVPLLQWLGGISLIAWFLLI) form a helical membrane-spanning segment. At 401-406 (WMIWFW) the chain is on the intravirion side. A helical membrane pass occupies residues 407–429 (GPALLSILPPFIPIFVLFFLIWV). Over 430 to 431 (YI) the chain is Virion surface.

It belongs to the orthohepadnavirus major surface antigen family. In terms of assembly, in its internal form (Li-HBsAg), interacts with the capsid protein and with the isoform S. Interacts with host chaperone CANX. As to quaternary structure, associates with host chaperone CANX through its pre-S2 N glycan; this association may be essential for isoform M proper secretion. Interacts with isoform L. Interacts with the antigens of satellite virus HDV (HDVAgs); this interaction is required for encapsidation of HDV genomic RNA. Isoform M is N-terminally acetylated by host at a ratio of 90%, and N-glycosylated by host at the pre-S2 region. In terms of processing, myristoylated.

The protein resides in the virion membrane. Its function is as follows. The large envelope protein exists in two topological conformations, one which is termed 'external' or Le-HBsAg and the other 'internal' or Li-HBsAg. In its external conformation the protein attaches the virus to cell receptors and thereby initiating infection. This interaction determines the species specificity and liver tropism. This attachment induces virion internalization predominantly through caveolin-mediated endocytosis. The large envelope protein also assures fusion between virion membrane and endosomal membrane. In its internal conformation the protein plays a role in virion morphogenesis and mediates the contact with the nucleocapsid like a matrix protein. The middle envelope protein plays an important role in the budding of the virion. It is involved in the induction of budding in a nucleocapsid independent way. In this process the majority of envelope proteins bud to form subviral lipoprotein particles of 22 nm of diameter that do not contain a nucleocapsid. The chain is Large envelope protein from Woodchuck hepatitis B virus (isolate 59) (WHV).